The sequence spans 205 residues: Colicin-E8 (205 aa).

Disordered stretches follow at residues 24 to 109 and 136 to 187; these read AQTD…PDRI and PELS…VYDM. 3 stretches are compositionally biased toward basic and acidic residues: residues 53-76, 88-99, and 159-178; these read QERRKQKENKEKDAKDKLDKESKR, PVGDKWLDDAGK, and RNKDTVGGRRSFELHHDKPI. Positions 173, 198, and 202 each coordinate Zn(2+).

This sequence belongs to the colicin/pyosin nuclease family.

Its function is as follows. This plasmid-coded bactericidal protein is an endonuclease active on both single- and double-stranded DNA but with undefined specificity. In terms of biological role, colicins are polypeptide toxins produced by and active against E.coli and closely related bacteria. The chain is Colicin-E8 (col) from Escherichia coli.